The chain runs to 292 residues: MASERLADGDSRYYLLKVAHEQFGCAPGELSEDQLQQADRIIGRQRHIEDAVLRSPDAIGVVIPPSQLEEAWAHIASRYESPEALQQALDAQALDAAGMRAMLARELRVEAVLDCVCAGLPEISDTDVSLYYFNHAEQFKVPAQHKAHILVTINEDFPENTREAARTRIETILKRLRGKPERFAEQAMKHSECPTAMQGGLLGEVVPGTLYPELDACLFQMARGELSPVLESPIGFHVLYCESVSPARQLTLEEILPRLRDRLQLRQRKAYQRKWLVCLLQQNATLENLAHG.

In terms of domain architecture, PpiC spans 148–243 (HILVTINEDF…IGFHVLYCES (96 aa)).

This sequence belongs to the PpiC/parvulin rotamase family.

The catalysed reaction is [protein]-peptidylproline (omega=180) = [protein]-peptidylproline (omega=0). Its function is as follows. Required for the activation and stabilization of the iron-component (NifH) of nitrogenase. Probable PPIase. The sequence is that of Putative peptidyl-prolyl cis-trans isomerase NifM (nifM) from Azotobacter vinelandii.